Consider the following 198-residue polypeptide: Putative glutathione S-transferase alpha-5 (198 aa).

Residues 2–78 (TKPTLTYFPV…YISEKHDFRG (77 aa)) form the GST N-terminal domain. Residues tyrosine 8, arginine 42, 49–50 (QL), and 62–63 (QT) contribute to the glutathione site. In terms of domain architecture, GST C-terminal spans 80–198 (TKEERARAHQ…YLESRPQSNF (119 aa)).

It belongs to the GST superfamily. Alpha family.

The enzyme catalyses RX + glutathione = an S-substituted glutathione + a halide anion + H(+). Conjugation of reduced glutathione to a wide number of exogenous and endogenous hydrophobic electrophiles. The sequence is that of Putative glutathione S-transferase alpha-5 (gsta5) from Dictyostelium discoideum (Social amoeba).